Consider the following 304-residue polypeptide: Non-specific ribonucleoside hydrolase RihC (304 aa).

Histidine 233 is an active-site residue.

It belongs to the IUNH family. RihC subfamily.

Its function is as follows. Hydrolyzes both purine and pyrimidine ribonucleosides with a broad-substrate specificity. The polypeptide is Non-specific ribonucleoside hydrolase RihC (Escherichia coli (strain 55989 / EAEC)).